The sequence spans 157 residues: Protein Smg (157 aa).

Belongs to the Smg family.

In Enterobacter sp. (strain 638), this protein is Protein Smg.